The following is a 604-amino-acid chain: Matrix metalloproteinase-21 (604 aa).

An N-terminal signal peptide occupies residues 1–22 (MPSIKLLVWCCLCVISPRLCHS). A propeptide spanning residues 23-180 (EKLFHSRDRS…PDPPKIRRKR (158 aa)) is cleaved from the precursor. The disordered stretch occupies residues 132-175 (KPRCGVPDNQMAKKETEKPTAAQSLENKTKDSENVTQQNPDPPK). The Cysteine switch motif lies at 133–140 (PRCGVPDN). Position 135 (Cys135) interacts with Zn(2+). 2 N-linked (GlcNAc...) asparagine glycosylation sites follow: Asn158 and Asn165. His318 is a binding site for Zn(2+). Glu319 is a catalytic residue. Residues His322 and His328 each coordinate Zn(2+). A disulfide bridge links Cys364 with Cys595. Hemopexin repeat units follow at residues 365–424 (EGPF…WHGI), 426–482 (VQNI…FPGI), 483–531 (PSPI…FPAV), and 538–594 (KGNI…WFDI). 2 N-linked (GlcNAc...) asparagine glycosylation sites follow: Asn404 and Asn407.

Belongs to the peptidase M10A family. The cofactor is Zn(2+). It depends on Ca(2+) as a cofactor. The precursor is cleaved by a furin endopeptidase.

Its subcellular location is the secreted. Functionally, plays a specialized role in the generation of left-right asymmetry during embryogenesis. May act as a negative regulator of the NOTCH-signaling pathway. This is Matrix metalloproteinase-21 (mmp21) from Xenopus laevis (African clawed frog).